Consider the following 72-residue polypeptide: Large ribosomal subunit protein bL31c (72 aa).

This sequence belongs to the bacterial ribosomal protein bL31 family. Type A subfamily. Part of the 50S ribosomal subunit.

Its subcellular location is the plastid. The protein resides in the chloroplast. Functionally, binds the 23S rRNA. The sequence is that of Large ribosomal subunit protein bL31c from Guillardia theta (Cryptophyte).